The sequence spans 313 residues: Olfactory receptor 5D18 (313 aa).

Residues 1–26 (MLLTDRNTSGTTFTLLGFSDYPELQV) are Extracellular-facing. N-linked (GlcNAc...) asparagine glycosylation occurs at N7. The chain crosses the membrane as a helical span at residues 27 to 47 (PLFLVFLAIYNVTVLGNIGLI). At 48–55 (VIIKINPK) the chain is on the cytoplasmic side. A helical membrane pass occupies residues 56–76 (LHTPMYFFLSQLSFVDFCYSS). The Extracellular segment spans residues 77–100 (IIAPKMLVNLVVKDRTISFLGCVV). Residues C98 and C190 are joined by a disulfide bond. Residues 101–121 (QFFFFCTFVVTESFLLAVMAY) traverse the membrane as a helical segment. The Cytoplasmic segment spans residues 122-140 (DRFVAICNPLLYTVNMSQK). Residues 141 to 161 (LCVLLVVGSYAWGVSCSLELT) form a helical membrane-spanning segment. The Extracellular segment spans residues 162–197 (CSALKLCFHGFNTINHFFCEFSSLLSLSCSDTYINQ). A helical membrane pass occupies residues 198–218 (WLLFFLATFNEISTLLIVLTS). Over 219–238 (YAFIVVTILKMRSVSGRRKA) the chain is Cytoplasmic. The chain crosses the membrane as a helical span at residues 239–259 (FSTCASHLTAITIFHGTILFL). Residues 260–272 (YCVPNSKNSRHTV) lie on the Extracellular side of the membrane. A helical membrane pass occupies residues 273–293 (KVASVFYTVVIPMLNPLIYSL). Residues 294-313 (RNKDVKDTVTEILDTKVFSY) lie on the Cytoplasmic side of the membrane.

The protein belongs to the G-protein coupled receptor 1 family.

The protein localises to the cell membrane. Its function is as follows. Odorant receptor. The sequence is that of Olfactory receptor 5D18 (OR5D18) from Homo sapiens (Human).